The sequence spans 1024 residues: Zn(2)-C6 fungal-type transcription factor FTF1a (1024 aa).

The segment at residues 137-164 (CIACRRKKVRCSGEKPACKHCLHSHIPC) is a DNA-binding region (zn(2)-C6 fungal-type).

Its subcellular location is the nucleus. Zn(2)-C6 fungal-type transcription factor that has a role in the establishment of the fungus within the plant and/or the progress of the disease. Regulates the expression of virulence factors such as SIX1 and SIX6. The polypeptide is Zn(2)-C6 fungal-type transcription factor FTF1a (Fusarium oxysporum f. sp. lycopersici (strain 4287 / CBS 123668 / FGSC 9935 / NRRL 34936) (Fusarium vascular wilt of tomato)).